The following is a 348-amino-acid chain: MNTRVGTIGNASLLTADAHPMIDPFGRAVTYLRVSVTDRCDFRCTYCMAENMTFLPKKDLLTLEELDRLCSAFVAKGVKKIRLTGGEPLVRKNIMYLVRRLGEKIGAGLDEVTLTTNGSQLSRHAEELYDCGVRRINVSLDTLDPDKFRKITRWGDFAKVMEGIDAAQKAGIKIKLNAVALKDFNDAEMPEIMRFAHGRGMDLTVIETMPMGEIDEDRTDQYLPLSKLRADLEKQFTLTDIDYQTGGPARYVRVAETGGRLGFITPMTHNFCESCNRVRLTCTGTLYMCLGQNDAADLRAALRATEDDALLHAAIDEAITRKPKGHDFIIDRTHNRPAVARHMSVTGG.

A Radical SAM core domain is found at 24–242 (PFGRAVTYLR…EKQFTLTDID (219 aa)). R33 is a binding site for GTP. [4Fe-4S] cluster-binding residues include C40 and C44. Y46 is a binding site for S-adenosyl-L-methionine. C47 provides a ligand contact to [4Fe-4S] cluster. GTP is bound at residue R82. G86 is a binding site for S-adenosyl-L-methionine. T115 contacts GTP. S139 provides a ligand contact to S-adenosyl-L-methionine. Residue K175 participates in GTP binding. M209 provides a ligand contact to S-adenosyl-L-methionine. C272 and C275 together coordinate [4Fe-4S] cluster. 277-279 (RVR) is a binding site for GTP. Position 289 (C289) interacts with [4Fe-4S] cluster.

Belongs to the radical SAM superfamily. MoaA family. In terms of assembly, monomer and homodimer. [4Fe-4S] cluster serves as cofactor.

It carries out the reaction GTP + AH2 + S-adenosyl-L-methionine = (8S)-3',8-cyclo-7,8-dihydroguanosine 5'-triphosphate + 5'-deoxyadenosine + L-methionine + A + H(+). The protein operates within cofactor biosynthesis; molybdopterin biosynthesis. Its function is as follows. Catalyzes the cyclization of GTP to (8S)-3',8-cyclo-7,8-dihydroguanosine 5'-triphosphate. The sequence is that of GTP 3',8-cyclase from Rhizobium leguminosarum bv. trifolii (strain WSM2304).